A 284-amino-acid chain; its full sequence is L-ribulose-5-phosphate 3-epimerase UlaE (284 aa).

The protein belongs to the L-ribulose-5-phosphate 3-epimerase family.

The catalysed reaction is L-ribulose 5-phosphate = L-xylulose 5-phosphate. It functions in the pathway cofactor degradation; L-ascorbate degradation; D-xylulose 5-phosphate from L-ascorbate: step 3/4. Functionally, catalyzes the isomerization of L-xylulose-5-phosphate to L-ribulose-5-phosphate. Is involved in the anaerobic L-ascorbate utilization. This chain is L-ribulose-5-phosphate 3-epimerase UlaE, found in Escherichia coli O139:H28 (strain E24377A / ETEC).